The primary structure comprises 735 residues: 1,4-alpha-glucan branching enzyme GlgB (735 aa).

Aspartate 418 acts as the Nucleophile in catalysis. The Proton donor role is filled by glutamate 471.

This sequence belongs to the glycosyl hydrolase 13 family. GlgB subfamily. As to quaternary structure, monomer.

It catalyses the reaction Transfers a segment of a (1-&gt;4)-alpha-D-glucan chain to a primary hydroxy group in a similar glucan chain.. Its pathway is glycan biosynthesis; glycogen biosynthesis. Functionally, catalyzes the formation of the alpha-1,6-glucosidic linkages in glycogen by scission of a 1,4-alpha-linked oligosaccharide from growing alpha-1,4-glucan chains and the subsequent attachment of the oligosaccharide to the alpha-1,6 position. This Agrobacterium fabrum (strain C58 / ATCC 33970) (Agrobacterium tumefaciens (strain C58)) protein is 1,4-alpha-glucan branching enzyme GlgB.